Consider the following 411-residue polypeptide: Na(+)-translocating NADH-quinone reductase subunit F (411 aa).

Residues 6–26 (AIGGVAMFTLIIMGLVAIILA) form a helical membrane-spanning segment. Residues 35–129 (GDVTIHINDN…DMKIEIDPEF (95 aa)) form the 2Fe-2S ferredoxin-type domain. Residues cysteine 72, cysteine 78, cysteine 81, and cysteine 113 each coordinate [2Fe-2S] cluster. One can recognise an FAD-binding FR-type domain in the interval 132-273 (VQKWECEVIS…SGPYGEFFAK (142 aa)).

This sequence belongs to the NqrF family. Composed of six subunits; NqrA, NqrB, NqrC, NqrD, NqrE and NqrF. It depends on [2Fe-2S] cluster as a cofactor. FAD is required as a cofactor.

The protein resides in the cell inner membrane. The enzyme catalyses a ubiquinone + n Na(+)(in) + NADH + H(+) = a ubiquinol + n Na(+)(out) + NAD(+). NQR complex catalyzes the reduction of ubiquinone-1 to ubiquinol by two successive reactions, coupled with the transport of Na(+) ions from the cytoplasm to the periplasm. The first step is catalyzed by NqrF, which accepts electrons from NADH and reduces ubiquinone-1 to ubisemiquinone by a one-electron transfer pathway. This Psychrobacter cryohalolentis (strain ATCC BAA-1226 / DSM 17306 / VKM B-2378 / K5) protein is Na(+)-translocating NADH-quinone reductase subunit F.